We begin with the raw amino-acid sequence, 209 residues long: Cytochrome bo(3) ubiquinol oxidase subunit 3 (209 aa).

Residues methionine 1–asparagine 29 are Cytoplasmic-facing. A helical transmembrane segment spans residues threonine 30–alanine 50. Over threonine 51–proline 72 the chain is Periplasmic. The chain crosses the membrane as a helical span at residues tyrosine 73–leucine 93. Over serine 94–glutamine 102 the chain is Cytoplasmic. A helical membrane pass occupies residues alanine 103–asparagine 123. Residues glutamate 124–serine 143 lie on the Periplasmic side of the membrane. The chain crosses the membrane as a helical span at residues phenylalanine 144 to valine 164. Residues leucine 165 to serine 186 are Cytoplasmic-facing. The helical transmembrane segment at leucine 187–glycine 207 threads the bilayer. The Periplasmic portion of the chain corresponds to alanine 208–leucine 209.

This sequence belongs to the cytochrome c oxidase subunit 3 family. Heterooctamer of two A chains, two B chains, two C chains and two D chains.

It localises to the cell inner membrane. Functionally, cytochrome bo(3) ubiquinol terminal oxidase is the component of the aerobic respiratory chain of E.coli that predominates when cells are grown at high aeration. Has proton pump activity across the membrane in addition to electron transfer, pumping 2 protons/electron. The chain is Cytochrome bo(3) ubiquinol oxidase subunit 3 (cyoC) from Pseudomonas aeruginosa (strain ATCC 15692 / DSM 22644 / CIP 104116 / JCM 14847 / LMG 12228 / 1C / PRS 101 / PAO1).